Reading from the N-terminus, the 252-residue chain is Undecaprenyl-diphosphatase (252 aa).

A run of 7 helical transmembrane segments spans residues 1–21, 42–62, 74–94, 95–115, 172–192, 206–226, and 232–252; these read MTTL…FLPI, HKAF…FLYF, ILIA…IIKS, LFNP…LILI, AAEF…FYDV, NLIV…KWLL, and HSFI…YLWY.

The protein belongs to the UppP family.

The protein localises to the cell inner membrane. It catalyses the reaction di-trans,octa-cis-undecaprenyl diphosphate + H2O = di-trans,octa-cis-undecaprenyl phosphate + phosphate + H(+). Its function is as follows. Catalyzes the dephosphorylation of undecaprenyl diphosphate (UPP). Confers resistance to bacitracin. The polypeptide is Undecaprenyl-diphosphatase (Sulfurihydrogenibium sp. (strain YO3AOP1)).